A 100-amino-acid chain; its full sequence is Small ribosomal subunit protein uS14c (100 aa).

The protein belongs to the universal ribosomal protein uS14 family. As to quaternary structure, part of the 30S ribosomal subunit.

The protein resides in the plastid. It localises to the chloroplast. Functionally, binds 16S rRNA, required for the assembly of 30S particles. The chain is Small ribosomal subunit protein uS14c from Helianthus annuus (Common sunflower).